A 307-amino-acid polypeptide reads, in one-letter code: Taste receptor type 2 member 10 (307 aa).

The Extracellular segment spans residues 1–6 (MLRVVE). A helical transmembrane segment spans residues 7-27 (GIFIFVVISESVFGVLGNGFI). The Cytoplasmic segment spans residues 28 to 42 (GLVNCIDCAKNKLST). Residues 43-63 (IGFILTGLAISRIFLIWIIIT) form a helical membrane-spanning segment. Topologically, residues 64-100 (DGFIQIFSPNIYASSNLIEYISYFWVIGNQSSMWFAT) are extracellular. The chain crosses the membrane as a helical span at residues 101 to 121 (SLSIFYFLKIANFSNYIFLWL). The Cytoplasmic segment spans residues 122–126 (KSRTN). Residues 127 to 147 (MVLPFMIVFLLISSLLNFAYI) traverse the membrane as a helical segment. The Extracellular segment spans residues 148–179 (AKILNDYKMKNDTVWDLNMYKSEYFIKQILLN). Residue asparagine 158 is glycosylated (N-linked (GlcNAc...) asparagine). The helical transmembrane segment at 180-200 (LGVIFFFTLSLITCVLLIISL) threads the bilayer. The Cytoplasmic segment spans residues 201–227 (WRHNRQMQSNVTGLRDSNTEAHVKAMK). The chain crosses the membrane as a helical span at residues 228 to 248 (VLISFIILFILYFIGMAIEIS). At 249–257 (YFTVRENKL) the chain is on the extracellular side. The helical transmembrane segment at 258 to 278 (LLMFGMTTTAIYPWGHSFILI) threads the bilayer. Residues 279-307 (LGNSKLKQASLRVLQQLKCCEKRKNLRVT) lie on the Cytoplasmic side of the membrane.

This sequence belongs to the G-protein coupled receptor T2R family.

It localises to the membrane. In terms of biological role, receptor that may play a role in the perception of bitterness and is gustducin-linked. May play a role in sensing the chemical composition of the gastrointestinal content. The activity of this receptor may stimulate alpha gustducin, mediate PLC-beta-2 activation and lead to the gating of TRPM5. The chain is Taste receptor type 2 member 10 (TAS2R10) from Pan paniscus (Pygmy chimpanzee).